The sequence spans 544 residues: Chaperonin GroEL 1 (544 aa).

Residues 29 to 32, 86 to 90, glycine 413, 482 to 484, and aspartate 498 each bind ATP; these read TLGP, DGTTT, and NVL.

It belongs to the chaperonin (HSP60) family. Forms a cylinder of 14 subunits composed of two heptameric rings stacked back-to-back. Interacts with the co-chaperonin GroES.

It localises to the cytoplasm. The enzyme catalyses ATP + H2O + a folded polypeptide = ADP + phosphate + an unfolded polypeptide.. In terms of biological role, together with its co-chaperonin GroES, plays an essential role in assisting protein folding. The GroEL-GroES system forms a nano-cage that allows encapsulation of the non-native substrate proteins and provides a physical environment optimized to promote and accelerate protein folding. The sequence is that of Chaperonin GroEL 1 from Chloroflexus aurantiacus (strain ATCC 29366 / DSM 635 / J-10-fl).